A 722-amino-acid chain; its full sequence is Protein Aster-A (722 aa).

Positions 1-62 are disordered; the sequence is MFDTTPHSGR…KSGVSGTLST (62 aa). Residues 8–18 are compositionally biased toward low complexity; sequence SGRSSPSSSPS. The GRAM domain maps to 93–160; that stretch reads EDFRKLFSKL…KEVTCLKKEK (68 aa). The interval 256 to 336 is disordered; it reads ISPSGAADHS…DGPTSSLGPL (81 aa). Serine 265, serine 269, serine 273, and serine 417 each carry phosphoserine. The VASt domain occupies 369-540; the sequence is SGRLLINSVF…ELAKAEKLSL (172 aa). Residues 561-600 are disordered; it reads LSWRGHRDGPQHPDPDPCTQTSMHTSGSLSSRFSEPSVDQ. Residues 565 to 575 show a composition bias toward basic and acidic residues; the sequence is GHRDGPQHPDP. The span at 578 to 594 shows a compositional bias: polar residues; that stretch reads CTQTSMHTSGSLSSRFS. Residues 609–629 traverse the membrane as a helical segment; the sequence is ALVLISIVLIVLIALNALLFY.

As to expression, highly expressed in the brain.

It is found in the endoplasmic reticulum membrane. Its subcellular location is the cell membrane. It localises to the cytoplasmic vesicle. The protein localises to the autophagosome. Functionally, cholesterol transporter that mediates non-vesicular transport of cholesterol from the plasma membrane (PM) to the endoplasmic reticulum (ER). Contains unique domains for binding cholesterol and the PM, thereby serving as a molecular bridge for the transfer of cholesterol from the PM to the ER. Plays a crucial role in cholesterol homeostasis and has the unique ability to localize to the PM based on the level of membrane cholesterol. In lipid-poor conditions localizes to the ER membrane and in response to excess cholesterol in the PM is recruited to the endoplasmic reticulum-plasma membrane contact sites (EPCS) which is mediated by the GRAM domain. At the EPCS, the sterol-binding VASt/ASTER domain binds to the cholesterol in the PM and facilitates its transfer from the PM to ER. May play a role in tumor progression. Plays a role in autophagy regulation and is required for biogenesis of the autophagosome. This function in autophagy requires its cholesterol-transfer activity. The polypeptide is Protein Aster-A (Mus musculus (Mouse)).